The chain runs to 127 residues: Thioredoxin domain-containing protein 8 (127 aa).

The 126-residue stretch at 2–127 (VQKIKSMREF…KLEEKIQELM (126 aa)) folds into the Thioredoxin domain. A disulfide bond links Cys32 and Cys35.

The protein belongs to the thioredoxin family. In terms of tissue distribution, testis-specific. Expressed in spermatozoa, sperm tail, elongated and round spermatids.

The protein localises to the cytoplasm. Its subcellular location is the golgi apparatus. In terms of biological role, may be required for post-translational modifications of proteins required for acrosomal biogenesis. May act by reducing disulfide bonds within the sperm. The chain is Thioredoxin domain-containing protein 8 (Txndc8) from Rattus norvegicus (Rat).